Consider the following 333-residue polypeptide: Flagellar P-ring protein (333 aa).

Residues 1 to 22 (MRRNILSMFLFITLIIYSSIFA) form the signal peptide.

It belongs to the FlgI family. The basal body constitutes a major portion of the flagellar organelle and consists of four rings (L,P,S, and M) mounted on a central rod.

It localises to the periplasm. The protein resides in the bacterial flagellum basal body. Assembles around the rod to form the L-ring and probably protects the motor/basal body from shearing forces during rotation. This is Flagellar P-ring protein from Fervidobacterium nodosum (strain ATCC 35602 / DSM 5306 / Rt17-B1).